The primary structure comprises 297 residues: Phosphoribosylaminoimidazole-succinocarboxamide synthase (297 aa).

Belongs to the SAICAR synthetase family.

It catalyses the reaction 5-amino-1-(5-phospho-D-ribosyl)imidazole-4-carboxylate + L-aspartate + ATP = (2S)-2-[5-amino-1-(5-phospho-beta-D-ribosyl)imidazole-4-carboxamido]succinate + ADP + phosphate + 2 H(+). The protein operates within purine metabolism; IMP biosynthesis via de novo pathway; 5-amino-1-(5-phospho-D-ribosyl)imidazole-4-carboxamide from 5-amino-1-(5-phospho-D-ribosyl)imidazole-4-carboxylate: step 1/2. The protein is Phosphoribosylaminoimidazole-succinocarboxamide synthase (purC) of Mycobacterium leprae (strain TN).